We begin with the raw amino-acid sequence, 81 residues long: Photosystem I iron-sulfur center (81 aa).

4Fe-4S ferredoxin-type domains are found at residues 2-31 (AHSV…MISW) and 39-68 (IASA…VRVY). [4Fe-4S] cluster is bound by residues Cys-11, Cys-14, Cys-17, Cys-21, Cys-48, Cys-51, Cys-54, and Cys-58.

The eukaryotic PSI reaction center is composed of at least 11 subunits. [4Fe-4S] cluster serves as cofactor.

Its subcellular location is the plastid. The protein localises to the chloroplast thylakoid membrane. The enzyme catalyses reduced [plastocyanin] + hnu + oxidized [2Fe-2S]-[ferredoxin] = oxidized [plastocyanin] + reduced [2Fe-2S]-[ferredoxin]. Apoprotein for the two 4Fe-4S centers FA and FB of photosystem I (PSI); essential for photochemical activity. FB is the terminal electron acceptor of PSI, donating electrons to ferredoxin. The C-terminus interacts with PsaA/B/D and helps assemble the protein into the PSI complex. Required for binding of PsaD and PsaE to PSI. PSI is a plastocyanin-ferredoxin oxidoreductase, converting photonic excitation into a charge separation, which transfers an electron from the donor P700 chlorophyll pair to the spectroscopically characterized acceptors A0, A1, FX, FA and FB in turn. This chain is Photosystem I iron-sulfur center (psaC), found in Anthoceros angustus (Hornwort).